The primary structure comprises 145 residues: Catabolic 3-dehydroquinase (145 aa).

Catalysis depends on Tyr-24, which acts as the Proton acceptor. Substrate is bound by residues Asn-77, His-83, and Asp-90. Residue His-103 is the Proton donor of the active site. Substrate-binding positions include 104-105 (IT) and Arg-114.

The protein belongs to the type-II 3-dehydroquinase family. Homododecamer. Adopts a ring-like structure, composed of an arrangement of two hexameric rings stacked on top of one another.

It carries out the reaction 3-dehydroquinate = 3-dehydroshikimate + H2O. Its pathway is aromatic compound metabolism; 3,4-dihydroxybenzoate biosynthesis; 3,4-dihydroxybenzoate from 3-dehydroquinate: step 1/2. Its function is as follows. Is involved in the catabolism of quinate. Allows the utilization of quinate as carbon source via the beta-ketoadipate pathway. This Clavispora lusitaniae (strain ATCC 42720) (Yeast) protein is Catabolic 3-dehydroquinase.